Reading from the N-terminus, the 738-residue chain is Vesicle-fusing ATPase (738 aa).

Residues 507 to 512 (NGIINY) and 547 to 554 (PGCGKSSL) each bind ATP.

Belongs to the AAA ATPase family. As to quaternary structure, interacts with syn7A, snpA and snpC. Mg(2+) serves as cofactor.

Its subcellular location is the cytoplasmic vesicle membrane. It is found in the endosome membrane. The enzyme catalyses ATP + H2O = ADP + phosphate + H(+). In terms of biological role, required for vesicle-mediated transport. Involved in endocytosis and endosome-endosome fusion. May be required for transport from the endoplasmic reticulum to the Golgi stack, and for the fusion of transport vesicles within the Golgi cisternae. Required for cell polarity, locomotion and chemotaxis. In Dictyostelium discoideum (Social amoeba), this protein is Vesicle-fusing ATPase (nsfA).